A 135-amino-acid chain; its full sequence is UPF0102 protein Mjls_1965 (135 aa).

The protein belongs to the UPF0102 family.

In Mycobacterium sp. (strain JLS), this protein is UPF0102 protein Mjls_1965.